The sequence spans 226 residues: MEHRVFTIANFFSSNHDFITGFFVVLTAVLMFFISLGASRKMQMVPMGLQNVYESIISAILSVAKDIIGEELARKYFPLAGTIALYVFFSNMIGIIPGFESPTASWSFTLVLALIVFFYYHFEGIRVQGFFKYFAHFAGPVKWLAPFMFPIEIISHFSRIVSLSFRLFGNIKGDDMFLLIMLLLVPWAVPVAPFMVLFFMGILQAFVFMILTYVYLAGAVLTDEGH.

The next 6 helical transmembrane spans lie at 18–38 (FITGFFVVLTAVLMFFISLGA), 79–99 (LAGTIALYVFFSNMIGIIPGF), 105–125 (SWSFTLVLALIVFFYYHFEGI), 134–154 (FAHFAGPVKWLAPFMFPIEII), 179–199 (LIMLLLVPWAVPVAPFMVLFF), and 201–221 (GILQAFVFMILTYVYLAGAVL).

This sequence belongs to the ATPase A chain family. In terms of assembly, F-type ATPases have 2 components, CF(1) - the catalytic core - and CF(0) - the membrane proton channel. CF(1) has five subunits: alpha(3), beta(3), gamma(1), delta(1), epsilon(1). CF(0) has three main subunits: a(1), b(2) and c(9-12). The alpha and beta chains form an alternating ring which encloses part of the gamma chain. CF(1) is attached to CF(0) by a central stalk formed by the gamma and epsilon chains, while a peripheral stalk is formed by the delta and b chains.

It localises to the cell inner membrane. Functionally, key component of the proton channel; it plays a direct role in the translocation of protons across the membrane. This Helicobacter pylori (strain J99 / ATCC 700824) (Campylobacter pylori J99) protein is ATP synthase subunit a.